The primary structure comprises 947 residues: Glutamate receptor 2.8 (947 aa).

The signal sequence occupies residues 1–26; the sequence is MNPKKNNNTFLSYFVCLFLLLEVGLG. Topologically, residues 27 to 577 are extracellular; it reads QNQISEIKVG…NTWVFLKPWG (551 aa). Asn-42, Asn-118, Asn-333, Asn-341, Asn-348, Asn-420, Asn-478, and Asn-524 each carry an N-linked (GlcNAc...) asparagine glycan. The chain crosses the membrane as a helical span at residues 578 to 598; that stretch reads LDLWVTTACFFVLIGFVVWLF. Residues 599–607 are Cytoplasmic-facing; it reads EHRVNTDFR. Residues 608–628 traverse the membrane as a helical segment; the sequence is GPPHHQIGTSFWFSFSTMVFA. The Cytoplasmic portion of the chain corresponds to 629 to 632; sequence HREK. A helical membrane pass occupies residues 633-653; sequence VVSNLARFVVVVWCFVVLVLT. The Extracellular portion of the chain corresponds to 654 to 819; it reads QSYTANLTSF…NRLSLRSFWG (166 aa). 4 N-linked (GlcNAc...) asparagine glycosylation sites follow: Asn-659, Asn-704, Asn-723, and Asn-779. A helical membrane pass occupies residues 820–840; the sequence is LFLIAGIASFLALLIFVFLFL. Topologically, residues 841-947 are cytoplasmic; sequence YENRHTLCDD…ESDIECVVEQ (107 aa).

This sequence belongs to the glutamate-gated ion channel (TC 1.A.10.1) family. May form heteromers. In terms of tissue distribution, expressed predominantly in leaves.

It localises to the membrane. Glutamate-gated receptor that probably acts as a non-selective cation channel. May be involved in light-signal transduction and calcium homeostasis via the regulation of calcium influx into cells. In Arabidopsis thaliana (Mouse-ear cress), this protein is Glutamate receptor 2.8 (GLR2.8).